A 1048-amino-acid polypeptide reads, in one-letter code: NACHT, LRR and PYD domains-containing protein 8 (1048 aa).

The tract at residues methionine 1–histidine 23 is disordered. The span at proline 11 to histidine 23 shows a compositional bias: low complexity. Residues proline 33–glutamate 131 form the Pyrin domain. The 324-residue stretch at lysine 204–leucine 527 folds into the NACHT domain. Residue glycine 210–threonine 217 coordinates ATP. LRR repeat units follow at residues asparagine 815–valine 838, alanine 839–serine 861, serine 866–alanine 890, asparagine 923–asparagine 950, and asparagine 980–serine 1007. Positions proline 1029–proline 1048 are disordered.

Belongs to the NLRP family.

The protein localises to the cytoplasm. In terms of biological role, involved in inflammation. In Homo sapiens (Human), this protein is NACHT, LRR and PYD domains-containing protein 8 (NLRP8).